Reading from the N-terminus, the 226-residue chain is PKHD-type hydroxylase Bpet2704 (226 aa).

The Fe2OG dioxygenase domain maps to 78–178 (KIFPPLFNRY…RISAFFWMQS (101 aa)). Fe cation is bound by residues His-96, Asp-98, and His-159. Arg-169 contributes to the 2-oxoglutarate binding site.

Fe(2+) serves as cofactor. It depends on L-ascorbate as a cofactor.

The chain is PKHD-type hydroxylase Bpet2704 from Bordetella petrii (strain ATCC BAA-461 / DSM 12804 / CCUG 43448).